Reading from the N-terminus, the 147-residue chain is Deoxyuridine 5'-triphosphate nucleotidohydrolase (147 aa).

Substrate-binding positions include 67–69 (RSG), asparagine 80, and 84–86 (TID).

It belongs to the dUTPase family. Mg(2+) serves as cofactor.

It catalyses the reaction dUTP + H2O = dUMP + diphosphate + H(+). It participates in pyrimidine metabolism; dUMP biosynthesis; dUMP from dCTP (dUTP route): step 2/2. Its function is as follows. This enzyme is involved in nucleotide metabolism: it produces dUMP, the immediate precursor of thymidine nucleotides and it decreases the intracellular concentration of dUTP so that uracil cannot be incorporated into DNA. This is Deoxyuridine 5'-triphosphate nucleotidohydrolase from Anaeromyxobacter dehalogenans (strain 2CP-1 / ATCC BAA-258).